The chain runs to 438 residues: MSEDTVFTVAGQDWDDVVDAVKASSGGGGSEGGEERIVVNMGPQHPSTHGVLRLILEIEGETVTEARCGIGYLHTGIEKNLEYRTWTQGVTFVTRMDYLSPFFNETAYCLGVEKLLDITDEVPERASVIRVMLMELNRISSHLVALATGGMELGAVTAMLFGFRERELVLDVFEMITGLRMNHAYIRPGGLSQDLPEGAVEKVRELLALMPERLRDMENLLNDNRIWKGRTQGIGYLDLTGCMALGITGPMLRATGLPHDLRKSQPYCGYENYEFDVSTDTGCDAYGRYLIRVDEMKESLKIVEQCLDKLRPGPIMAEDKKIAWPADLTLGPDGLGNSPGHVREIMDSSMESLIHHFKLVTEGFRVPPGQVYVAVESPRGELGVHMVSDGGTRPFRVHFRDPSFTNLQSVAATCEGGMVADVIAAVASIDPVMGGVDR.

Belongs to the complex I 49 kDa subunit family. In terms of assembly, NDH-1 is composed of 14 different subunits. Subunits NuoB, C, D, E, F, and G constitute the peripheral sector of the complex.

The protein localises to the cell membrane. It carries out the reaction a quinone + NADH + 5 H(+)(in) = a quinol + NAD(+) + 4 H(+)(out). Functionally, NDH-1 shuttles electrons from NADH, via FMN and iron-sulfur (Fe-S) centers, to quinones in the respiratory chain. The immediate electron acceptor for the enzyme in this species is believed to be a menaquinone. Couples the redox reaction to proton translocation (for every two electrons transferred, four hydrogen ions are translocated across the cytoplasmic membrane), and thus conserves the redox energy in a proton gradient. This Rhodococcus jostii (strain RHA1) protein is NADH-quinone oxidoreductase subunit D.